A 380-amino-acid chain; its full sequence is Probable protein phosphatase 2C 34 (380 aa).

Residues 32-335 (AAGEFSMAAA…DDISVIVVYL (304 aa)) enclose the PPM-type phosphatase domain. Mn(2+)-binding residues include D66, G67, D267, and D326.

Belongs to the PP2C family. Requires Mg(2+) as cofactor. The cofactor is Mn(2+).

It catalyses the reaction O-phospho-L-seryl-[protein] + H2O = L-seryl-[protein] + phosphate. It carries out the reaction O-phospho-L-threonyl-[protein] + H2O = L-threonyl-[protein] + phosphate. The polypeptide is Probable protein phosphatase 2C 34 (BIPP2C2) (Oryza sativa subsp. indica (Rice)).